Reading from the N-terminus, the 522-residue chain is Glucans biosynthesis protein G (522 aa).

The signal sequence occupies residues 1–33; sequence MLDNKFGFKQRVASLRWLSAAIMLSVSAVPAWA.

Belongs to the OpgD/OpgG family.

It is found in the periplasm. Its pathway is glycan metabolism; osmoregulated periplasmic glucan (OPG) biosynthesis. Involved in the biosynthesis of osmoregulated periplasmic glucans (OPGs). The polypeptide is Glucans biosynthesis protein G (Pectobacterium atrosepticum (strain SCRI 1043 / ATCC BAA-672) (Erwinia carotovora subsp. atroseptica)).